A 23-amino-acid polypeptide reads, in one-letter code: Conotoxin Tx6.5 (23 aa).

3 disulfide bridges follow: Cys2–Cys10, Cys5–Cys15, and Cys9–Cys20. Position 12 is a 4-hydroxyproline; partial (Pro12).

It belongs to the conotoxin U superfamily. As to expression, expressed by the venom duct.

It localises to the secreted. The sequence is that of Conotoxin Tx6.5 from Conus textile (Cloth-of-gold cone).